Consider the following 220-residue polypeptide: 7-cyano-7-deazaguanine synthase (220 aa).

Position 10–20 (10–20) interacts with ATP; that stretch reads FSGGQDSTTCL. 4 residues coordinate Zn(2+): Cys-186, Cys-195, Cys-198, and Cys-201.

This sequence belongs to the QueC family. As to quaternary structure, homodimer. It depends on Zn(2+) as a cofactor.

It catalyses the reaction 7-carboxy-7-deazaguanine + NH4(+) + ATP = 7-cyano-7-deazaguanine + ADP + phosphate + H2O + H(+). Its pathway is purine metabolism; 7-cyano-7-deazaguanine biosynthesis. Functionally, catalyzes the ATP-dependent conversion of 7-carboxy-7-deazaguanine (CDG) to 7-cyano-7-deazaguanine (preQ(0)). The protein is 7-cyano-7-deazaguanine synthase of Bacillus mycoides (strain KBAB4) (Bacillus weihenstephanensis).